The following is a 601-amino-acid chain: Probable protein arginine N-methyltransferase 3 (601 aa).

Residues 1-10 show a composition bias toward basic and acidic residues; that stretch reads MAATMVKHEI. Positions 1 to 50 are disordered; the sequence is MAATMVKHEILNYSEDEEENYSDEGDWGDWKADDNGIEGGEEEEEDDGDD. 2 stretches are compositionally biased toward acidic residues: residues 14–27 and 35–50; these read SEDE…EGDW and NGIE…DGDD. The C2H2-type zinc-finger motif lies at 57–78; it reads CLFCDSHFVSCDLLFEHCRLSH. Positions 242–554 constitute an SAM-dependent MTase PRMT-type domain; sequence NENYFGSYSS…NDRREAIGTE (313 aa). The S-adenosyl-L-homocysteine site is built by Arg264, Gly288, Glu310, Ser312, Val345, and Glu346. Residues Glu365 and Glu374 contribute to the active site.

It belongs to the class I-like SAM-binding methyltransferase superfamily. Protein arginine N-methyltransferase family.

The protein resides in the cytoplasm. It localises to the cytosol. The enzyme catalyses L-arginyl-[protein] + S-adenosyl-L-methionine = N(omega)-methyl-L-arginyl-[protein] + S-adenosyl-L-homocysteine + H(+). It carries out the reaction L-arginyl-[protein] + 2 S-adenosyl-L-methionine = N(omega),N(omega)-dimethyl-L-arginyl-[protein] + 2 S-adenosyl-L-homocysteine + 2 H(+). Its function is as follows. Protein-arginine N-methyltransferase that catalyzes both the monomethylation and asymmetric dimethylation of the guanidino nitrogens of arginine residues in target proteins, and therefore falls into the group of type I methyltransferases. The polypeptide is Probable protein arginine N-methyltransferase 3 (PRMT3) (Arabidopsis thaliana (Mouse-ear cress)).